Consider the following 230-residue polypeptide: Ribose-5-phosphate isomerase A (230 aa).

Substrate contacts are provided by residues 32 to 35, 85 to 88, and 98 to 101; these read TGST, DGAD, and KGGG. The active-site Proton acceptor is the Glu-107. Lys-125 is a binding site for substrate.

This sequence belongs to the ribose 5-phosphate isomerase family. Homodimer.

The enzyme catalyses aldehydo-D-ribose 5-phosphate = D-ribulose 5-phosphate. The protein operates within carbohydrate degradation; pentose phosphate pathway; D-ribose 5-phosphate from D-ribulose 5-phosphate (non-oxidative stage): step 1/1. Catalyzes the reversible conversion of ribose-5-phosphate to ribulose 5-phosphate. The polypeptide is Ribose-5-phosphate isomerase A (Burkholderia ambifaria (strain ATCC BAA-244 / DSM 16087 / CCUG 44356 / LMG 19182 / AMMD) (Burkholderia cepacia (strain AMMD))).